A 331-amino-acid chain; its full sequence is 4-hydroxythreonine-4-phosphate dehydrogenase (331 aa).

Substrate contacts are provided by His-137 and Thr-138. A divalent metal cation contacts are provided by His-167, His-212, and His-267. Substrate is bound by residues Lys-275, Asn-284, and Arg-293.

The protein belongs to the PdxA family. As to quaternary structure, homodimer. The cofactor is Zn(2+). Requires Mg(2+) as cofactor. It depends on Co(2+) as a cofactor.

It localises to the cytoplasm. It catalyses the reaction 4-(phosphooxy)-L-threonine + NAD(+) = 3-amino-2-oxopropyl phosphate + CO2 + NADH. It functions in the pathway cofactor biosynthesis; pyridoxine 5'-phosphate biosynthesis; pyridoxine 5'-phosphate from D-erythrose 4-phosphate: step 4/5. Functionally, catalyzes the NAD(P)-dependent oxidation of 4-(phosphooxy)-L-threonine (HTP) into 2-amino-3-oxo-4-(phosphooxy)butyric acid which spontaneously decarboxylates to form 3-amino-2-oxopropyl phosphate (AHAP). This chain is 4-hydroxythreonine-4-phosphate dehydrogenase, found in Yersinia pseudotuberculosis serotype I (strain IP32953).